Reading from the N-terminus, the 334-residue chain is Ketol-acid reductoisomerase (NADP(+)) (334 aa).

Residues 1–181 (MNIYYDKNAD…GGGRTGILET (181 aa)) enclose the KARI N-terminal Rossmann domain. NADP(+) contacts are provided by residues 24–27 (YGSQ), Arg-47, Ser-50, Ser-52, and 82–85 (DEFQ). His-107 is an active-site residue. Gly-133 lines the NADP(+) pocket. Positions 182-323 (SFKDETETDL…ESLRSMMPWI (142 aa)) constitute a KARI C-terminal knotted domain. Mg(2+)-binding residues include Asp-190, Glu-194, Glu-226, and Glu-230. Position 251 (Ser-251) interacts with substrate.

It belongs to the ketol-acid reductoisomerase family. Requires Mg(2+) as cofactor.

It carries out the reaction (2R)-2,3-dihydroxy-3-methylbutanoate + NADP(+) = (2S)-2-acetolactate + NADPH + H(+). It catalyses the reaction (2R,3R)-2,3-dihydroxy-3-methylpentanoate + NADP(+) = (S)-2-ethyl-2-hydroxy-3-oxobutanoate + NADPH + H(+). The protein operates within amino-acid biosynthesis; L-isoleucine biosynthesis; L-isoleucine from 2-oxobutanoate: step 2/4. It functions in the pathway amino-acid biosynthesis; L-valine biosynthesis; L-valine from pyruvate: step 2/4. In terms of biological role, involved in the biosynthesis of branched-chain amino acids (BCAA). Catalyzes an alkyl-migration followed by a ketol-acid reduction of (S)-2-acetolactate (S2AL) to yield (R)-2,3-dihydroxy-isovalerate. In the isomerase reaction, S2AL is rearranged via a Mg-dependent methyl migration to produce 3-hydroxy-3-methyl-2-ketobutyrate (HMKB). In the reductase reaction, this 2-ketoacid undergoes a metal-dependent reduction by NADPH to yield (R)-2,3-dihydroxy-isovalerate. This is Ketol-acid reductoisomerase (NADP(+)) from Vesicomyosocius okutanii subsp. Calyptogena okutanii (strain HA).